A 178-amino-acid chain; its full sequence is 6,7-dimethyl-8-ribityllumazine synthase (178 aa).

5-amino-6-(D-ribitylamino)uracil-binding positions include Tyr27, 58–60 (SLE), and 82–84 (CVI). 87 to 88 (AT) is a binding site for (2S)-2-hydroxy-3-oxobutyl phosphate. His90 functions as the Proton donor in the catalytic mechanism. 5-amino-6-(D-ribitylamino)uracil is bound at residue Asn114. Residue Arg128 coordinates (2S)-2-hydroxy-3-oxobutyl phosphate.

This sequence belongs to the DMRL synthase family.

The catalysed reaction is (2S)-2-hydroxy-3-oxobutyl phosphate + 5-amino-6-(D-ribitylamino)uracil = 6,7-dimethyl-8-(1-D-ribityl)lumazine + phosphate + 2 H2O + H(+). The protein operates within cofactor biosynthesis; riboflavin biosynthesis; riboflavin from 2-hydroxy-3-oxobutyl phosphate and 5-amino-6-(D-ribitylamino)uracil: step 1/2. Functionally, catalyzes the formation of 6,7-dimethyl-8-ribityllumazine by condensation of 5-amino-6-(D-ribitylamino)uracil with 3,4-dihydroxy-2-butanone 4-phosphate. This is the penultimate step in the biosynthesis of riboflavin. This chain is 6,7-dimethyl-8-ribityllumazine synthase, found in Jannaschia sp. (strain CCS1).